Reading from the N-terminus, the 544-residue chain is Probable protein kinase UbiB (544 aa).

In terms of domain architecture, Protein kinase spans 123 to 501 (EFDIKPLASA…KRQQATGKFL (379 aa)). ATP-binding positions include 129–137 (LASASIAQV) and lysine 152. Residue aspartate 287 is the Proton acceptor of the active site. 2 consecutive transmembrane segments (helical) span residues 496-516 (ATGKFLFGVGATLVVCSAILV) and 519-539 (AYEQLSMASGIAGVTFWLLSW).

The protein belongs to the ABC1 family. UbiB subfamily.

The protein resides in the cell inner membrane. The protein operates within cofactor biosynthesis; ubiquinone biosynthesis [regulation]. In terms of biological role, is probably a protein kinase regulator of UbiI activity which is involved in aerobic coenzyme Q (ubiquinone) biosynthesis. In Vibrio parahaemolyticus serotype O3:K6 (strain RIMD 2210633), this protein is Probable protein kinase UbiB.